The sequence spans 442 residues: Elongation factor 1-alpha (442 aa).

The region spanning 5-228 (KTHINIVVIG…DSVTPPERPV (224 aa)) is the tr-type G domain. The segment at 14-21 (GHVDSGKS) is G1. 14-21 (GHVDSGKS) lines the GTP pocket. Residues 70–74 (GITID) form a G2 region. The segment at 91–94 (DAPG) is G3. Residues 91–95 (DAPGH) and 153–156 (NKMD) contribute to the GTP site. The segment at 153–156 (NKMD) is G4. Residues 192 to 194 (SGF) are G5.

Belongs to the TRAFAC class translation factor GTPase superfamily. Classic translation factor GTPase family. EF-Tu/EF-1A subfamily.

The protein localises to the cytoplasm. Functionally, this protein promotes the GTP-dependent binding of aminoacyl-tRNA to the A-site of ribosomes during protein biosynthesis. The chain is Elongation factor 1-alpha from Entamoeba histolytica (strain ATCC 30459 / HM-1:IMSS / ABRM).